Reading from the N-terminus, the 293-residue chain is Actin-related protein 2/3 complex subunit 2 (293 aa).

The protein belongs to the ARPC2 family. As to quaternary structure, component of the Arp2/3 complex composed of arpB/Arp2, arpC/Arp3, arcA/p41-arc, arcB/p34-arc, arcC/p21-arc, arcD/p20-arc and arcE/p16-arc. Interacts with carmil (via the region between the LRR domain and COOH-terminal proline-rich domain); carmil is required for Arp2/3-dependent actin nucleation. Arp2/3 complex, MyoB, MyoC, and the alpha and beta subunits of capping protein all form a larger complex with carmil.

Its subcellular location is the cytoplasm. It localises to the cytoskeleton. It is found in the cell projection. The protein resides in the cytosol. The protein localises to the cell cortex. Its subcellular location is the pseudopodium. Functions as a component of the Arp2/3 complex which is involved in regulation of actin polymerization and together with an activating nucleation-promoting factor (NPF) mediates the formation of branched actin networks. Seems to contact the pointed end of the daughter actin filament. The Arp2/3 complex is involved in organizing the actin system in cell motility and chemotaxis, in phagocytosis and macropinocytosis, at late steps of endosome processing, and in mitosis. In concert with a group of other proteins, the Arp2/3 complex plays a general role in the rapid activation and adaptation of the actin system to its multiple functions. This Dictyostelium discoideum (Social amoeba) protein is Actin-related protein 2/3 complex subunit 2 (arcB).